Reading from the N-terminus, the 79-residue chain is Acyl carrier protein (79 aa).

The 76-residue stretch at Gln3–Lys78 folds into the Carrier domain. Ser38 is modified (O-(pantetheine 4'-phosphoryl)serine).

This sequence belongs to the acyl carrier protein (ACP) family. Post-translationally, 4'-phosphopantetheine is transferred from CoA to a specific serine of apo-ACP by AcpS. This modification is essential for activity because fatty acids are bound in thioester linkage to the sulfhydryl of the prosthetic group.

It is found in the cytoplasm. It functions in the pathway lipid metabolism; fatty acid biosynthesis. In terms of biological role, carrier of the growing fatty acid chain in fatty acid biosynthesis. This Prochlorococcus marinus (strain MIT 9301) protein is Acyl carrier protein.